The following is a 353-amino-acid chain: Protein CYTOKININ-RESPONSIVE GATA TRANSCRIPTION FACTOR 1 (353 aa).

Positions 137-144 match the Nuclear localization signal 1 motif; sequence IRKGAATD. Residues 142-166 are disordered; sequence ATDPEGGAVRKPRRRAQAHQDESQQ. Residues 178–203 form a GATA-type zinc finger; it reads CSDCNTTKTPLWRSGPCGPKSLCNAC. The Nuclear localization signal 2 motif lies at 244–251; the sequence is EKRAADVD.

Belongs to the type IV zinc-finger family. Class B subfamily. In terms of tissue distribution, mostly expressed in leaves and stems, and, at low levels, in roots.

The protein resides in the nucleus. In terms of biological role, transcriptional regulator that specifically binds 5'-GATA-3' or 5'-GAT-3' motifs within gene promoters. Influences the expression of nuclear encoded chloroplast-targeted genes. Regulates chloroplast development and promotes chlorophyll accumulation. Modulates plant architecture (e.g. height, length and width of leaf blades, and flowering tillers production) and represses tillering, probably by modulating number of cells. Promotes senescence. Involved in grain filling, panicle development and starch production. The protein is Protein CYTOKININ-RESPONSIVE GATA TRANSCRIPTION FACTOR 1 of Oryza sativa subsp. japonica (Rice).